A 37-amino-acid chain; its full sequence is MVEPLLSGIVLGLIPITLAGLFVTAYLQYRRGDQLDF.

A helical transmembrane segment spans residues 5–25; the sequence is LLSGIVLGLIPITLAGLFVTA.

The protein belongs to the PetG family. As to quaternary structure, the 4 large subunits of the cytochrome b6-f complex are cytochrome b6, subunit IV (17 kDa polypeptide, PetD), cytochrome f and the Rieske protein, while the 4 small subunits are PetG, PetL, PetM and PetN. The complex functions as a dimer.

Its subcellular location is the plastid. It localises to the chloroplast thylakoid membrane. Component of the cytochrome b6-f complex, which mediates electron transfer between photosystem II (PSII) and photosystem I (PSI), cyclic electron flow around PSI, and state transitions. PetG is required for either the stability or assembly of the cytochrome b6-f complex. This is Cytochrome b6-f complex subunit 5 from Chaetosphaeridium globosum (Charophycean green alga).